We begin with the raw amino-acid sequence, 703 residues long: Calpain-8 (703 aa).

In terms of domain architecture, Calpain catalytic spans Leu-45–Ser-344. Active-site residues include Cys-105, His-262, and Asn-286. The interval Lys-355–Leu-512 is domain III. Residues Glu-513–Asp-531 form a linker region. 4 consecutive EF-hand domains span residues Glu-532–Lys-566, Phe-575–Arg-608, Leu-605–Thr-640, and Ile-670–Val-703. Positions Glu-532 to Val-703 are domain IV. Residues Asp-588, Asp-590, Thr-592, Ser-594, Glu-599, Asp-618, Asn-620, Thr-624, and Glu-629 each coordinate Ca(2+).

It belongs to the peptidase C2 family. In terms of assembly, monomer and homooligomer. Interacts with COPS1/GPS1, COPB1, EYA2, NME2, NME4 and TOMM70. It depends on Ca(2+) as a cofactor. Post-translationally, undergoes autolytic cleavage between Ala-5 and Ala-6 which gives rise to fragments extending from Ala-6 to the C-terminus, Ala-6 to the EF-hand 2 domain and from Ala-6 to the beginning of domain III. Predominantly expressed in the stomach. Localizes strictly to the surface mucus cells in the gastric epithelium and the mucus-secreting goblet cells in the duodenum. Detected in the pituitary after estrogen stimulation.

The protein localises to the cytoplasm. The protein resides in the golgi apparatus. The enzyme catalyses Broad endopeptidase specificity.. Its function is as follows. Calcium-regulated non-lysosomal thiol-protease. Involved in membrane trafficking in the gastric surface mucus cells (pit cells) and may involve the membrane trafficking of mucus cells via interactions with coat protein. Proteolytically cleaves the beta-subunit of coatomer complex. The polypeptide is Calpain-8 (Capn8) (Rattus norvegicus (Rat)).